Consider the following 555-residue polypeptide: CTP synthase (555 aa).

Residues 1 to 272 form an amidoligase domain region; it reads MQPTSTTTKH…DAYVVRKLDL (272 aa). Ser-19 provides a ligand contact to CTP. Position 19 (Ser-19) interacts with UTP. Residues 20–25 and Asp-77 contribute to the ATP site; that span reads SLGKGL. Mg(2+) contacts are provided by Asp-77 and Glu-146. CTP is bound by residues 153-155, 193-198, and Lys-229; these read DIE and KTKPTQ. UTP is bound by residues 193–198 and Lys-229; that span reads KTKPTQ. Positions 297 to 548 constitute a Glutamine amidotransferase type-1 domain; sequence TVALVGKYID…VKAAVARQVA (252 aa). L-glutamine is bound at residue Gly-360. Cys-387 acts as the Nucleophile; for glutamine hydrolysis in catalysis. Residues 388-391, Glu-411, and Arg-473 contribute to the L-glutamine site; that span reads LGLQ. Catalysis depends on residues His-521 and Glu-523.

The protein belongs to the CTP synthase family. As to quaternary structure, homotetramer.

The enzyme catalyses UTP + L-glutamine + ATP + H2O = CTP + L-glutamate + ADP + phosphate + 2 H(+). It carries out the reaction L-glutamine + H2O = L-glutamate + NH4(+). It catalyses the reaction UTP + NH4(+) + ATP = CTP + ADP + phosphate + 2 H(+). It functions in the pathway pyrimidine metabolism; CTP biosynthesis via de novo pathway; CTP from UDP: step 2/2. Allosterically activated by GTP, when glutamine is the substrate; GTP has no effect on the reaction when ammonia is the substrate. The allosteric effector GTP functions by stabilizing the protein conformation that binds the tetrahedral intermediate(s) formed during glutamine hydrolysis. Inhibited by the product CTP, via allosteric rather than competitive inhibition. Its function is as follows. Catalyzes the ATP-dependent amination of UTP to CTP with either L-glutamine or ammonia as the source of nitrogen. Regulates intracellular CTP levels through interactions with the four ribonucleotide triphosphates. The chain is CTP synthase from Streptomyces griseus subsp. griseus (strain JCM 4626 / CBS 651.72 / NBRC 13350 / KCC S-0626 / ISP 5235).